Reading from the N-terminus, the 59-residue chain is Early growth response protein 1 (59 aa).

3 C2H2-type zinc fingers span residues 1–18, 24–46, and 52–59; these read CDRR…IRIH, FQCR…IRTH, and FACDICGR.

This sequence belongs to the EGR C2H2-type zinc-finger protein family.

Its subcellular location is the nucleus. The protein localises to the cytoplasm. In terms of biological role, transcriptional regulator. Recognizes and binds to the DNA sequence 5'-GCG(T/G)GGGCG-3'(EGR-site) in the promoter region of target genes. Binds double-stranded target DNA, irrespective of the cytosine methylation status. Regulates the transcription of numerous target genes, and thereby plays an important role in regulating the response to growth factors, DNA damage, and ischemia. Plays a role in the regulation of cell survival, proliferation and cell death. Mediates responses to ischemia and hypoxia; regulates the expression of proteins that are involved in inflammatory processes. Plays a role in regulating the expression of circadian clock genes. In Serinus canaria (Island canary), this protein is Early growth response protein 1 (EGR1).